The sequence spans 62 residues: uncharacterized protein (62 aa).

An N-terminal signal peptide occupies residues 1-19; sequence MKLIILLFVVAAFVTLAMG.

This is an uncharacterized protein from Lepidoptera (butterflies and moths).